Here is a 222-residue protein sequence, read N- to C-terminus: Embryonic stem cell-related gene protein (222 aa).

In terms of tissue distribution, expressed only in fetal ovary and in undifferentiated ES cells.

Its subcellular location is the nucleus. In Homo sapiens (Human), this protein is Embryonic stem cell-related gene protein (ESRG).